The primary structure comprises 312 residues: Putative electron transfer flavoprotein subunit YdiR (312 aa).

254–282 (LYLTLGISGQIQHMVGGNGAKVIVAINKD) is an FAD binding site.

The protein belongs to the ETF alpha-subunit/FixB family. YdiR and YdiQ form a heterodimer.

Functionally, may play a role in a redox process. The chain is Putative electron transfer flavoprotein subunit YdiR (ydiR) from Escherichia coli (strain K12).